Here is an 850-residue protein sequence, read N- to C-terminus: Coiled-coil and C2 domain-containing protein 1B (850 aa).

Positions 1 to 10 (MPGPRPRKGP) are enriched in basic residues. Disordered regions lie at residues 1–21 (MPGP…ETAK), 54–73 (LTGE…RAPL), and 114–145 (GVDE…EQPV). Over residues 114-129 (GVDEETGLVDDSEETS) the composition is skewed to acidic residues. The stretch at 167–213 (LQALLEERIQNYREAAASAKEAGEAAKARRCERGLKTLESQLATVRK) forms a coiled coil. 2 disordered regions span residues 215 to 277 (GKIC…SDPD) and 436 to 525 (FAEL…SPSV). The span at 234 to 244 (AHQERPSKDSE) shows a compositional bias: basic and acidic residues. Pro residues predominate over residues 440 to 450 (PVPPGFPPIPG). 2 stretches are compositionally biased toward low complexity: residues 489-502 (PAQA…AQPL) and 511-524 (EPKA…LSPS). The residue at position 585 (serine 585) is a Phosphoserine. At threonine 588 the chain carries Phosphothreonine. The region spanning 668–807 (DPPSHHFELK…EKECEIREIM (140 aa)) is the C2 domain.

In terms of assembly, interacts with CHMP4B. In terms of tissue distribution, expressed in epididymal sperm but not in testicular sperm (at protein level).

It is found in the nucleus. In terms of biological role, transcription factor that binds specifically to the DRE (dual repressor element) and represses HTR1A gene transcription in neuronal cells. This chain is Coiled-coil and C2 domain-containing protein 1B (Cc2d1b), found in Rattus norvegicus (Rat).